Reading from the N-terminus, the 125-residue chain is Phosphoribosyl-AMP cyclohydrolase (125 aa).

Position 74 (Asp-74) interacts with Mg(2+). Residue Cys-75 coordinates Zn(2+). 2 residues coordinate Mg(2+): Asp-76 and Asp-78. Positions 92 and 99 each coordinate Zn(2+).

The protein belongs to the PRA-CH family. As to quaternary structure, homodimer. It depends on Mg(2+) as a cofactor. Zn(2+) is required as a cofactor.

It localises to the cytoplasm. It catalyses the reaction 1-(5-phospho-beta-D-ribosyl)-5'-AMP + H2O = 1-(5-phospho-beta-D-ribosyl)-5-[(5-phospho-beta-D-ribosylamino)methylideneamino]imidazole-4-carboxamide. It participates in amino-acid biosynthesis; L-histidine biosynthesis; L-histidine from 5-phospho-alpha-D-ribose 1-diphosphate: step 3/9. In terms of biological role, catalyzes the hydrolysis of the adenine ring of phosphoribosyl-AMP. This chain is Phosphoribosyl-AMP cyclohydrolase, found in Syntrophotalea carbinolica (strain DSM 2380 / NBRC 103641 / GraBd1) (Pelobacter carbinolicus).